The primary structure comprises 229 residues: Putative germin-like protein 12-3 (229 aa).

An N-terminal signal peptide occupies residues 1–22; that stretch reads MASSNFFLLIPLIALVTTQAMA. A disulfide bridge links C32 with C47. A Cupin type-1 domain is found at 62–217; it reads ANLDKPMDIT…AFQVDKKAVD (156 aa). The N-linked (GlcNAc...) asparagine glycan is linked to N78. H111, H113, E118, and H162 together coordinate Mn(2+).

Belongs to the germin family. Oligomer (believed to be a pentamer but probably hexamer).

The protein resides in the secreted. It is found in the extracellular space. The protein localises to the apoplast. Functionally, may play a role in plant defense. Probably has no oxalate oxidase activity even if the active site is conserved. This chain is Putative germin-like protein 12-3, found in Oryza sativa subsp. japonica (Rice).